The following is a 283-amino-acid chain: Bifunctional protein FolD (283 aa).

NADP(+)-binding positions include 165–167 and serine 190; that span reads GRS.

The protein belongs to the tetrahydrofolate dehydrogenase/cyclohydrolase family. As to quaternary structure, homodimer.

It carries out the reaction (6R)-5,10-methylene-5,6,7,8-tetrahydrofolate + NADP(+) = (6R)-5,10-methenyltetrahydrofolate + NADPH. The catalysed reaction is (6R)-5,10-methenyltetrahydrofolate + H2O = (6R)-10-formyltetrahydrofolate + H(+). The protein operates within one-carbon metabolism; tetrahydrofolate interconversion. In terms of biological role, catalyzes the oxidation of 5,10-methylenetetrahydrofolate to 5,10-methenyltetrahydrofolate and then the hydrolysis of 5,10-methenyltetrahydrofolate to 10-formyltetrahydrofolate. The polypeptide is Bifunctional protein FolD (Methylibium petroleiphilum (strain ATCC BAA-1232 / LMG 22953 / PM1)).